A 514-amino-acid chain; its full sequence is Exoglucanase 1 (514 aa).

An N-terminal signal peptide occupies residues 1–17 (MYQKLALISAFLATARA). Positions 18–453 (QSACTLQAET…GSTGNSSGGN (436 aa)) are catalytic. Intrachain disulfides connect Cys21/Cys89, Cys36/Cys42, Cys67/Cys88, Cys78/Cys84, Cys155/Cys414, Cys189/Cys227, Cys193/Cys226, Cys247/Cys273, Cys255/Cys260, and Cys278/Cys348. Residues Asn62 and Asn81 are each glycosylated (N-linked (GlcNAc...) asparagine). The active-site Nucleophile is the Glu229. Glu234 acts as the Proton donor in catalysis. The N-linked (GlcNAc...) asparagine glycan is linked to Asn287. Disordered stretches follow at residues 401 to 427 (NETS…LESN) and 444 to 481 (GSTG…PTQT). The segment at 454–478 (PPGGNPPGTTTTRRPATSTGSSPGP) is linker. The span at 460-479 (PGTTTTRRPATSTGSSPGPT) shows a compositional bias: low complexity. Residues 478 to 514 (PTQTHYGQCGGIGYSGPTVCASGSTCQVLNPYYSQCL) enclose the CBM1 domain. Cystine bridges form between Cys486–Cys503 and Cys497–Cys513.

Belongs to the glycosyl hydrolase 7 (cellulase C) family.

The catalysed reaction is Hydrolysis of (1-&gt;4)-beta-D-glucosidic linkages in cellulose and cellotetraose, releasing cellobiose from the non-reducing ends of the chains.. In terms of biological role, the biological conversion of cellulose to glucose generally requires three types of hydrolytic enzymes: (1) Endoglucanases which cut internal beta-1,4-glucosidic bonds; (2) Exocellobiohydrolases that cut the disaccharide cellobiose from the non-reducing end of the cellulose polymer chain; (3) Beta-1,4-glucosidases which hydrolyze the cellobiose and other short cello-oligosaccharides to glucose. This chain is Exoglucanase 1 (cbh1), found in Hypocrea rufa (Trichoderma viride).